We begin with the raw amino-acid sequence, 420 residues long: ATP phosphoribosyltransferase regulatory subunit (420 aa).

Belongs to the class-II aminoacyl-tRNA synthetase family. HisZ subfamily. In terms of assembly, heteromultimer composed of HisG and HisZ subunits.

Its subcellular location is the cytoplasm. It participates in amino-acid biosynthesis; L-histidine biosynthesis; L-histidine from 5-phospho-alpha-D-ribose 1-diphosphate: step 1/9. In terms of biological role, required for the first step of histidine biosynthesis. May allow the feedback regulation of ATP phosphoribosyltransferase activity by histidine. In Bacillus cereus (strain ATCC 10987 / NRS 248), this protein is ATP phosphoribosyltransferase regulatory subunit.